A 292-amino-acid polypeptide reads, in one-letter code: Universal stress protein Mb2346c (292 aa).

It belongs to the universal stress protein A family.

The polypeptide is Universal stress protein Mb2346c (Mycobacterium bovis (strain ATCC BAA-935 / AF2122/97)).